The chain runs to 463 residues: Perilipin-5 (463 aa).

Residues 1 to 32 are disordered; it reads MDQRGEDTTLAPHSRMSGDQTAQDPGSSLGEL. Residues 1 to 123 are interaction with LIPE; the sequence is MDQRGEDTTL…KLEEKLPFLQ (123 aa). Positions 1 to 188 are essential for lipid droplet targeting; the sequence is MDQRGEDTTL…RFLPMTEAEL (188 aa). Serine 17, serine 163, and serine 337 each carry phosphoserine. Positions 17-26 are enriched in polar residues; sequence SGDQTAQDPG. The interval 200–463 is interaction with PNPLA2 and ABHD5; sequence VGTVEEQRQQ…KHTMMPELDF (264 aa). Residues 433–463 form a disordered region; the sequence is AWEAESADPGGQEAEPPRGQGKHTMMPELDF. Residues 444 to 463 form a necessary for mitochondria recruitment at the lipid droplet surface region; the sequence is QEAEPPRGQGKHTMMPELDF.

This sequence belongs to the perilipin family. As to quaternary structure, homooligomer. Interacts with PNPLA2; prevents interaction of PNPLA2 with ABHD5. Interacts with ABHD5; targets ABHD5 to lipid droplets and promotes interaction of ABHD5 with PNPLA2. Interacts with LIPE. In terms of processing, phosphorylated by PKA. Phosphorylated on serine in skeletal muscle at rest or with lipolytic stimulation. As to expression, highly expressed in oxidative tissues, including heart, liver, brown adipose tissue (BAT) and slow-twitch fibers of skeletal muscle. Lower expression in epididymal white adipose tissue and anterior tibialis and quadriceps. Expressed in adrenal glands. Isoform 2 has the highest expression in heart.

Its subcellular location is the lipid droplet. The protein localises to the cytoplasm. The protein resides in the mitochondrion. Its function is as follows. Lipid droplet-associated protein that maintains the balance between lipogenesis and lipolysis and also regulates fatty acid oxidation in oxidative tissues. Recruits mitochondria to the surface of lipid droplets and is involved in lipid droplet homeostasis by regulating both the storage of fatty acids in the form of triglycerides and the release of fatty acids for mitochondrial fatty acid oxidation. In lipid droplet triacylglycerol hydrolysis, plays a role as a scaffolding protein for three major key lipolytic players: ABHD5, PNPLA2 and LIPE. Reduces the triacylglycerol hydrolase activity of PNPLA2 by recruiting and sequestering PNPLA2 to lipid droplets. Phosphorylation by PKA enables lipolysis probably by promoting release of ABHD5 from the perilipin scaffold and by facilitating interaction of ABHD5 with PNPLA2. Also increases lipolysis through interaction with LIPE and upon PKA-mediated phosphorylation of LIPE. In Mus musculus (Mouse), this protein is Perilipin-5 (Plin5).